We begin with the raw amino-acid sequence, 311 residues long: Aspartate carbamoyltransferase catalytic subunit (311 aa).

2 residues coordinate carbamoyl phosphate: Arg-59 and Thr-60. Lys-87 is an L-aspartate binding site. The carbamoyl phosphate site is built by Arg-109, His-139, and Gln-142. Residues Arg-172 and Arg-224 each coordinate L-aspartate. Residues Ala-265 and Pro-266 each coordinate carbamoyl phosphate.

It belongs to the aspartate/ornithine carbamoyltransferase superfamily. ATCase family. As to quaternary structure, heterododecamer (2C3:3R2) of six catalytic PyrB chains organized as two trimers (C3), and six regulatory PyrI chains organized as three dimers (R2).

It catalyses the reaction carbamoyl phosphate + L-aspartate = N-carbamoyl-L-aspartate + phosphate + H(+). The protein operates within pyrimidine metabolism; UMP biosynthesis via de novo pathway; (S)-dihydroorotate from bicarbonate: step 2/3. In terms of biological role, catalyzes the condensation of carbamoyl phosphate and aspartate to form carbamoyl aspartate and inorganic phosphate, the committed step in the de novo pyrimidine nucleotide biosynthesis pathway. The sequence is that of Aspartate carbamoyltransferase catalytic subunit from Streptococcus equi subsp. zooepidemicus (strain MGCS10565).